The chain runs to 139 residues: MRIMGLDVGSKTVGVAISDPLGFTAQGLEIIKIDEESGNFGFDRLAELVKEYKVDKFVVGLPKNMNNTSGPRVEASQAYGDKITELFNLPVEYQDERLTTVQAERMLVEQADISRGKRKKVIDKLAAQLILQNYLDRMF.

Belongs to the YqgF nuclease family.

It localises to the cytoplasm. Its function is as follows. Could be a nuclease involved in processing of the 5'-end of pre-16S rRNA. The protein is Putative pre-16S rRNA nuclease of Streptococcus agalactiae serotype Ia (strain ATCC 27591 / A909 / CDC SS700).